Here is a 283-residue protein sequence, read N- to C-terminus: Pyridoxal kinase PdxY (283 aa).

S8 is a substrate binding site. Positions 110 and 147 each coordinate ATP. D219 provides a ligand contact to substrate.

Belongs to the pyridoxine kinase family. PdxY subfamily. In terms of assembly, homodimer. Mg(2+) serves as cofactor.

It catalyses the reaction pyridoxal + ATP = pyridoxal 5'-phosphate + ADP + H(+). It functions in the pathway cofactor metabolism; pyridoxal 5'-phosphate salvage; pyridoxal 5'-phosphate from pyridoxal: step 1/1. Its function is as follows. Pyridoxal kinase involved in the salvage pathway of pyridoxal 5'-phosphate (PLP). Catalyzes the phosphorylation of pyridoxal to PLP. This is Pyridoxal kinase PdxY from Corynebacterium diphtheriae (strain ATCC 700971 / NCTC 13129 / Biotype gravis).